Here is a 144-residue protein sequence, read N- to C-terminus: Large ribosomal subunit protein uL15 (144 aa).

Positions 1–52 (MRLNSLSPAEGAKHSAKRLGRGISSGLGKTGGRGHKGQKSRTGGGVRRGFEG) are disordered.

The protein belongs to the universal ribosomal protein uL15 family. As to quaternary structure, part of the 50S ribosomal subunit.

Its function is as follows. Binds to the 23S rRNA. This is Large ribosomal subunit protein uL15 from Actinobacillus pleuropneumoniae serotype 7 (strain AP76).